A 957-amino-acid chain; its full sequence is MTQTLSQLENSGAFIERHIGPDAAQQQEMLNAVGAQSLNALTGQIVPKDIQLATPPQVGAPATEYAALAELKAIASRNKRFTSYIGMGYTAVQLPPVILRNMLENPGWYTAYTPYQPEVSQGRLEALLNFQQVTLDLTGLDMASASLLDEATAAAEAMAMAKRVSKLKNANRFFVASDVHPQTLDVVRTRAETFGFEVIVDDAQKVLDHQDVFGVLLQQVGTTGEIHDYTALISELKSRKIVVSVAADIMALVLLTAPGKQGADIVFGSAQRFGVPMGYGGPHAAFFAAKDEYKRSMPGRIIGVSKDAAGNTALRMAMQTREQHIRREKANSNICTSQVLLANIASLYAVYHGPIGLKRIANRIHRLTDILAAGLQQKGLKLRHAHYFDTLCVEVADKAGVLARAEAAEINLRSDILNAVGITLDETTTRENVMQLFSVLLGDNHGLDIDTLDKDVAHDSRSIQPAMLRDDEILTHPVFNRYHSETEMMRYMHSLERKDLALNQAMIPLGSCTMKLNAAAEMIPITWPEFAELHPFCPPEQAEGYQQMIAQLADWLVKLTGYDAVCMQPNSGAQGEYAGLLAIRHYHESRNEGHRDICLIPASAHGTNPASAHMAGMQVVVVACDKNGNIDLADLRAKAEQAGDNLSCIMVTYPSTHGVYEETIREVCEVVHQFGGQVYLDGANMNAQVGITSPGFIGADVSHLNLHKTFCIPHGGGGPGMGPIGVKAHLAPFVPGHSVVQIEGMLTRQGAVSAAPFGSASILPISWMYIRMMGAEGLKKASQVAILNANYIASRLQDAFPVLYTGRDGRVAHECILDIRPLKEETGISELDIAKRLIDYGFHAPTMSFPVAGTLMVEPTESESKVELDRFIDAMLAIRAEIDQVKAGVWPLEDNPLVNAPHIQSELVAEWAHPYSREVAVFPAGVADKYWPTVKRLDDVYGDRNLFCSCVPISEYQ.

An N6-(pyridoxal phosphate)lysine modification is found at Lys708.

Belongs to the GcvP family. The glycine cleavage system is composed of four proteins: P, T, L and H. It depends on pyridoxal 5'-phosphate as a cofactor.

It catalyses the reaction N(6)-[(R)-lipoyl]-L-lysyl-[glycine-cleavage complex H protein] + glycine + H(+) = N(6)-[(R)-S(8)-aminomethyldihydrolipoyl]-L-lysyl-[glycine-cleavage complex H protein] + CO2. Its function is as follows. The glycine cleavage system catalyzes the degradation of glycine. The P protein binds the alpha-amino group of glycine through its pyridoxal phosphate cofactor; CO(2) is released and the remaining methylamine moiety is then transferred to the lipoamide cofactor of the H protein. The chain is Glycine dehydrogenase (decarboxylating) from Shigella dysenteriae serotype 1 (strain Sd197).